The sequence spans 549 residues: Polymorphic pseudokinase ROP5 (549 aa).

Positions 1–24 are cleaved as a signal peptide; sequence MATKLARLATWLVLVGCLLWRAGA. The Protein kinase domain maps to 234-527; the sequence is LKLVEPLRVG…LEAMETPEFL (294 aa). Arg-241, Asp-244, Arg-245, Ser-246, Lys-263, Met-337, Pro-338, Ala-340, Asp-343, and Asp-393 together coordinate ATP. Asp-244 contacts ADP. Residues Ser-246, Lys-263, Met-337, Pro-338, and Ala-340 each coordinate ADP. Asp-393 provides a ligand contact to ADP. Mg(2+)-binding residues include Asp-393 and Asp-407. Residue Asn-434 is glycosylated (N-linked (GlcNAc...) asparagine). A disulfide bridge connects residues Cys-458 and Cys-492.

This sequence belongs to the protein kinase superfamily. Ser/Thr protein kinase family. As to quaternary structure, component of a complex at least composed of ROP18 and ROP5. Interacts with GRA7. Interacts with ROP17. Interacts with mouse IRGA6/IIGP1; the interaction results in inhibition of IRGA6/IIGP1 GTPase activity and/or oligomerization.

It is found in the secreted. The protein localises to the parasitophorous vacuole. It localises to the cytoplasmic vesicle. Its subcellular location is the secretory vesicle. The protein resides in the rhoptry. Its function is as follows. Pseudokinase. Essential for virulence in the type I lineage. Mediates parasite survival in mouse monocytes. Required for the parasite ability to resist mouse innate immune effectors triggered by the IFN-gamma (IFNG). Reduces the accumulation of mouse IRGA6 (IIGP1) and IRGB6 (TGTP1/TGTP2), immunity-related GTPases (IRGs) that protect mice from infection by certain intracellular pathogens, on the parasitophorous vacuole and IRG-mediated killing of parasites by mouse cells. Regulates the activity of ROP18, an active kinase that targets IRGs to prevent IRG-mediated parasite killing by mouse cells. Acts as an allosteric inhibitor of mouse IRGA6 (IIGP1). Does not affect IFN-gamma (IFNG)-mediated parasite killing in human cells that do not possess the large variety of IRGs. This Toxoplasma gondii protein is Polymorphic pseudokinase ROP5.